Consider the following 530-residue polypeptide: Histone-arginine methyltransferase CARMER (530 aa).

One can recognise an SAM-dependent MTase PRMT-type domain in the interval 141 to 450; the sequence is ASQYFQFYGY…QSYDVTIDLH (310 aa). Positions 154, 163, 187, 209, 238, and 266 each coordinate S-adenosyl-L-methionine. The residue at position 501 (arginine 501) is an Asymmetric dimethylarginine; by autocatalysis.

The protein belongs to the class I-like SAM-binding methyltransferase superfamily. Protein arginine N-methyltransferase family. Homodimer. In terms of processing, the dimethylated protein is the major form.

Its subcellular location is the cytoplasm. The protein localises to the nucleus. It catalyses the reaction L-arginyl-[protein] + 2 S-adenosyl-L-methionine = N(omega),N(omega)-dimethyl-L-arginyl-[protein] + 2 S-adenosyl-L-homocysteine + 2 H(+). Its function is as follows. Methylates (mono- and asymmetric dimethylation) the guanidino nitrogens of arginyl residues in proteins. May methylate histone H3 at 'Arg-17' and activate transcription via chromatin remodeling. The chain is Histone-arginine methyltransferase CARMER (Art4) from Drosophila simulans (Fruit fly).